A 363-amino-acid polypeptide reads, in one-letter code: NAD(P)H-quinone oxidoreductase subunit 1, chloroplastic (363 aa).

The next 6 helical transmembrane spans lie at 28–48 (WVFV…LAIV), 98–118 (FSFG…VIPF), 129–149 (IGVF…LMSG), 253–273 (FGLF…FVTV), 300–320 (VFVT…FIFV), and 336–356 (LLNL…LLTT).

This sequence belongs to the complex I subunit 1 family. As to quaternary structure, NDH is composed of at least 16 different subunits, 5 of which are encoded in the nucleus.

Its subcellular location is the plastid. The protein resides in the chloroplast thylakoid membrane. The enzyme catalyses a plastoquinone + NADH + (n+1) H(+)(in) = a plastoquinol + NAD(+) + n H(+)(out). It carries out the reaction a plastoquinone + NADPH + (n+1) H(+)(in) = a plastoquinol + NADP(+) + n H(+)(out). Functionally, NDH shuttles electrons from NAD(P)H:plastoquinone, via FMN and iron-sulfur (Fe-S) centers, to quinones in the photosynthetic chain and possibly in a chloroplast respiratory chain. The immediate electron acceptor for the enzyme in this species is believed to be plastoquinone. Couples the redox reaction to proton translocation, and thus conserves the redox energy in a proton gradient. The protein is NAD(P)H-quinone oxidoreductase subunit 1, chloroplastic of Phaseolus vulgaris (Kidney bean).